The chain runs to 363 residues: Phospho-N-acetylmuramoyl-pentapeptide-transferase (363 aa).

10 consecutive transmembrane segments (helical) span residues 15–33, 82–102, 106–126, 147–167, 183–203, 207–227, 233–253, 260–280, 285–305, and 341–361; these read FTTL…SFIF, NTPT…LLIV, FYSM…IIGF, FILQ…NGYI, IVIF…VNLT, DGLA…EIFI, LIIY…FLKF, IFMG…ISIL, FTLF…IIQV, and IVEN…VLKI.

The protein belongs to the glycosyltransferase 4 family. MraY subfamily. Mg(2+) is required as a cofactor.

The protein localises to the cell inner membrane. The enzyme catalyses UDP-N-acetyl-alpha-D-muramoyl-L-alanyl-gamma-D-glutamyl-meso-2,6-diaminopimeloyl-D-alanyl-D-alanine + di-trans,octa-cis-undecaprenyl phosphate = di-trans,octa-cis-undecaprenyl diphospho-N-acetyl-alpha-D-muramoyl-L-alanyl-D-glutamyl-meso-2,6-diaminopimeloyl-D-alanyl-D-alanine + UMP. Its pathway is cell wall biogenesis; peptidoglycan biosynthesis. Catalyzes the initial step of the lipid cycle reactions in the biosynthesis of the cell wall peptidoglycan: transfers peptidoglycan precursor phospho-MurNAc-pentapeptide from UDP-MurNAc-pentapeptide onto the lipid carrier undecaprenyl phosphate, yielding undecaprenyl-pyrophosphoryl-MurNAc-pentapeptide, known as lipid I. This Prochlorococcus marinus (strain MIT 9515) protein is Phospho-N-acetylmuramoyl-pentapeptide-transferase.